Here is a 1150-residue protein sequence, read N- to C-terminus: Rho-type GTPase-activating protein 1 (1150 aa).

The span at 1–10 (MSQRDAKKDG) shows a compositional bias: basic and acidic residues. A disordered region spans residues 1 to 78 (MSQRDAKKDG…AESRKALPNQ (78 aa)). Over residues 40-62 (TTKNFPHSRHTSTVAGTEGGSSL) the composition is skewed to polar residues. 3 LIM zinc-binding domains span residues 114-177 (KICA…RRLD), 178-238 (LLCA…LFAA), and 483-546 (DLCY…SSNV). The tract at residues 586-683 (SQRKPLSVDP…SHGGSITGKS (98 aa)) is disordered. Residues 598 to 617 (ENVSSTVETAKQAETTASSD) show a composition bias toward polar residues. Residues 642 to 655 (SNETQSSSNSTETS) are compositionally biased toward low complexity. The residue at position 690 (Ser690) is a Phosphoserine. The disordered stretch occupies residues 726–759 (AFRHMPSYTDPSYRKNSGAIYDKNDGTQKGLTPK). Residues 837-1038 (VPLEILVERN…LLIENFEKFC (202 aa)) enclose the Rho-GAP domain. Disordered stretches follow at residues 1078–1097 (LDER…RQPI) and 1104–1150 (LTSD…IRDS). Over residues 1088 to 1097 (ASTKRKRQPI) the composition is skewed to basic residues. The segment covering 1104–1134 (LTSDVPSGSEVADTNSLSSTTKDEASPNSDA) has biased composition (polar residues).

The protein localises to the cell tip. It localises to the nucleus. GTPase-activating protein for Rho1. Involved in the F-actin patch localization, cell morphogenesis, regulation of septation, and cell wall synthesis. This Schizosaccharomyces pombe (strain 972 / ATCC 24843) (Fission yeast) protein is Rho-type GTPase-activating protein 1 (rga1).